A 315-amino-acid chain; its full sequence is Cytochrome bo(3) ubiquinol oxidase subunit 2 (315 aa).

The signal sequence occupies residues 1–24; the sequence is MRLRKYNKSLGWLSLFAGTVLLSG. Residue Cys25 is the site of N-palmitoyl cysteine attachment. Cys25 carries the S-diacylglycerol cysteine lipid modification. Residues 25 to 50 are Periplasmic-facing; sequence CNSALLDPKGQIGLEQRSLILTAFGL. Residues 51 to 68 traverse the membrane as a helical segment; it reads MLIVVIPAILMAVGFAWK. The Cytoplasmic segment spans residues 69–92; it reads YRASNKDAKYSPNWSHSNKVEAVV. A helical transmembrane segment spans residues 93–111; the sequence is WTVPILIIIFLAVLTWKTT. Over 112 to 315 the chain is Periplasmic; the sequence is HALEPSKPLA…MDMSHAESAH (204 aa). Residues 288 to 315 are disordered; that stretch reads MDMTQPEGEHSAHEGMEGMDMSHAESAH. Over residues 294–315 the composition is skewed to basic and acidic residues; sequence EGEHSAHEGMEGMDMSHAESAH.

The protein belongs to the cytochrome c oxidase subunit 2 family. In terms of assembly, heterooctamer of two A chains, two B chains, two C chains and two D chains.

The protein localises to the cell inner membrane. In terms of biological role, cytochrome bo(3) ubiquinol terminal oxidase is the component of the aerobic respiratory chain of E.coli that predominates when cells are grown at high aeration. Has proton pump activity across the membrane in addition to electron transfer, pumping 2 protons/electron. This is Cytochrome bo(3) ubiquinol oxidase subunit 2 (cyoA) from Escherichia coli O6:H1 (strain CFT073 / ATCC 700928 / UPEC).